The chain runs to 439 residues: Damage-control phosphatase ARMT1 (439 aa).

Residue A2 is modified to N-acetylalanine. S4 is subject to Phosphoserine. Residue K40 is modified to N6-acetyllysine. Mn(2+)-binding residues include D251 and N252. 251 to 252 (DN) serves as a coordination point for substrate. E256 and D289 together coordinate S-adenosyl-L-methionine. D289 contributes to the Mn(2+) binding site. Residues 365-369 (DLNYR) and K402 each bind substrate. Positions 399–402 (RTLK) match the Subfamily III RTxK motif motif.

The protein belongs to the damage-control phosphatase family. Sugar phosphate phosphatase III subfamily. Mn(2+) serves as cofactor. Requires Ni(2+) as cofactor. Automethylated.

The catalysed reaction is beta-D-fructose 1-phosphate + H2O = D-fructose + phosphate. The enzyme catalyses beta-D-fructose 6-phosphate = dihydroxyacetone + D-glyceraldehyde 3-phosphate. It catalyses the reaction L-glutamyl-[protein] + S-adenosyl-L-methionine = [protein]-L-glutamate 5-O-methyl ester + S-adenosyl-L-homocysteine. Its function is as follows. Metal-dependent phosphatase that shows phosphatase activity against several substrates, including fructose-1-phosphate and fructose-6-phosphate. Its preference for fructose-1-phosphate, a strong glycating agent that causes DNA damage rather than a canonical yeast metabolite, suggests a damage-control function in hexose phosphate metabolism. Has also been shown to have O-methyltransferase activity that methylates glutamate residues of target proteins to form gamma-glutamyl methyl ester residues. Possibly methylates PCNA, suggesting it is involved in the DNA damage response. This Mus musculus (Mouse) protein is Damage-control phosphatase ARMT1.